The following is a 160-amino-acid chain: Ribosomal RNA large subunit methyltransferase H (160 aa).

Positions 76 and 108 each coordinate S-adenosyl-L-methionine.

It belongs to the RNA methyltransferase RlmH family. In terms of assembly, homodimer.

Its subcellular location is the cytoplasm. The enzyme catalyses pseudouridine(1915) in 23S rRNA + S-adenosyl-L-methionine = N(3)-methylpseudouridine(1915) in 23S rRNA + S-adenosyl-L-homocysteine + H(+). Its function is as follows. Specifically methylates the pseudouridine at position 1915 (m3Psi1915) in 23S rRNA. The polypeptide is Ribosomal RNA large subunit methyltransferase H (Afipia carboxidovorans (strain ATCC 49405 / DSM 1227 / KCTC 32145 / OM5) (Oligotropha carboxidovorans)).